We begin with the raw amino-acid sequence, 213 residues long: Na(+)-translocating NADH-quinone reductase subunit D (213 aa).

A run of 7 helical transmembrane segments spans residues 21–41 (ILIA…VQTA), 42–62 (ITMG…VSLL), 77–97 (IIIS…FFDI), 101–121 (LSVF…SESL), 131–151 (FLDG…IGVI), 153–173 (ELFG…VYAS), and 183–203 (LSLM…IWLV).

The protein belongs to the NqrDE/RnfAE family. As to quaternary structure, composed of six subunits; NqrA, NqrB, NqrC, NqrD, NqrE and NqrF.

The protein resides in the cell inner membrane. It catalyses the reaction a ubiquinone + n Na(+)(in) + NADH + H(+) = a ubiquinol + n Na(+)(out) + NAD(+). NQR complex catalyzes the reduction of ubiquinone-1 to ubiquinol by two successive reactions, coupled with the transport of Na(+) ions from the cytoplasm to the periplasm. NqrA to NqrE are probably involved in the second step, the conversion of ubisemiquinone to ubiquinol. The polypeptide is Na(+)-translocating NADH-quinone reductase subunit D (Chlamydia pneumoniae (Chlamydophila pneumoniae)).